The following is a 450-amino-acid chain: UDP-N-acetylmuramoylalanine--D-glutamate ligase (450 aa).

119 to 125 (GSNGKTT) serves as a coordination point for ATP.

It belongs to the MurCDEF family.

The protein localises to the cytoplasm. It carries out the reaction UDP-N-acetyl-alpha-D-muramoyl-L-alanine + D-glutamate + ATP = UDP-N-acetyl-alpha-D-muramoyl-L-alanyl-D-glutamate + ADP + phosphate + H(+). It functions in the pathway cell wall biogenesis; peptidoglycan biosynthesis. Its function is as follows. Cell wall formation. Catalyzes the addition of glutamate to the nucleotide precursor UDP-N-acetylmuramoyl-L-alanine (UMA). This chain is UDP-N-acetylmuramoylalanine--D-glutamate ligase, found in Bacillus cereus (strain ATCC 14579 / DSM 31 / CCUG 7414 / JCM 2152 / NBRC 15305 / NCIMB 9373 / NCTC 2599 / NRRL B-3711).